We begin with the raw amino-acid sequence, 280 residues long: Large ribosomal subunit protein uL2 (280 aa).

The segment at 223–280 is disordered; that stretch reads VVMNPVDHPHGGGEGRTSGGRHPVTPWGKPTKGARTRNKNKASSKLIIRSRHAKKKGR. Residues 254-280 show a composition bias toward basic residues; sequence KGARTRNKNKASSKLIIRSRHAKKKGR.

The protein belongs to the universal ribosomal protein uL2 family. Part of the 50S ribosomal subunit. Forms a bridge to the 30S subunit in the 70S ribosome.

Functionally, one of the primary rRNA binding proteins. Required for association of the 30S and 50S subunits to form the 70S ribosome, for tRNA binding and peptide bond formation. It has been suggested to have peptidyltransferase activity; this is somewhat controversial. Makes several contacts with the 16S rRNA in the 70S ribosome. This Dinoroseobacter shibae (strain DSM 16493 / NCIMB 14021 / DFL 12) protein is Large ribosomal subunit protein uL2.